A 466-amino-acid polypeptide reads, in one-letter code: Asparagine--tRNA ligase (466 aa).

This sequence belongs to the class-II aminoacyl-tRNA synthetase family. As to quaternary structure, homodimer.

The protein localises to the cytoplasm. It carries out the reaction tRNA(Asn) + L-asparagine + ATP = L-asparaginyl-tRNA(Asn) + AMP + diphosphate + H(+). This chain is Asparagine--tRNA ligase, found in Photorhabdus laumondii subsp. laumondii (strain DSM 15139 / CIP 105565 / TT01) (Photorhabdus luminescens subsp. laumondii).